A 342-amino-acid chain; its full sequence is Forkhead box protein D5-C (342 aa).

Positions 1–89 are disordered; the sequence is MNLSQDSSAH…KHSLDTTTNG (89 aa). Over residues 20–34 the composition is skewed to acidic residues; the sequence is SDDEDEIDILGEDDP. Residues 59–70 are compositionally biased toward polar residues; sequence SKLSCNESASHS. Residues 71 to 83 are compositionally biased toward basic and acidic residues; that stretch reads SGERERGTSKHSL. A DNA-binding region (fork-head) is located at residues 97 to 191; that stretch reads KPPYSYIALI…DNGSFLRRRK (95 aa).

As to expression, at the onset of gastrulation, expressed in the superficial layer of cells in the dorsal blastopore lip (Spemann organizer). In the open neural plate, expressed in a row of cells destined to become the floor plate of the neural tube. After neural tube closure, only detected in the tailtip and a small area located at the midbrain/hindbrain boundary.

It is found in the nucleus. Transcriptional repressor. This chain is Forkhead box protein D5-C (foxd5-c), found in Xenopus laevis (African clawed frog).